The chain runs to 522 residues: Neutral amino acid uniporter 4 (522 aa).

10 helical membrane-spanning segments follow: residues 115 to 135 (AGVLLGPISLLFFGIISIHCM), 181 to 201 (LVDWFLVVTQLGFCSVYFVFL), 226 to 246 (SLDLRIYMFSFLPLIIPLVFI), 255 to 275 (LSFFANVSMAISLLIVYQYVI), 293 to 313 (YPLFFGTAIFAFEGIGVVLPL), 329 to 349 (IGMAIVTTLYISLATLGYFCF), 377 to 397 (FGIYVTYAIQYYVPAEIILPA), 409 to 429 (LCEFTMRFFLVCLTCAVAVLI), 435 to 455 (VISFVGAVSSSTLALILPPLV), and 467 to 487 (PWVIMKDVGIAVIGFVGFIAG). N-linked (GlcNAc...) asparagine glycosylation occurs at N515.

The protein belongs to the amino acid/polyamine transporter 2 family.

It localises to the lysosome membrane. It catalyses the reaction L-tryptophan(in) = L-tryptophan(out). The catalysed reaction is L-alanine(in) = L-alanine(out). The enzyme catalyses L-proline(in) = L-proline(out). Uniporter that mediates the transport of neutral amino acids like L-tryptophan, proline and alanine. The transport activity is sodium ions-independent, electroneutral and therefore functions via facilitated diffusion. This is Neutral amino acid uniporter 4 from Xenopus laevis (African clawed frog).